Here is a 671-residue protein sequence, read N- to C-terminus: Phenol 2-monooxygenase (671 aa).

Residues 10–43 and 295–305 each bind FAD; these read DVLIVGAGPAGVMAAAHLLSYGTTARPHRVRIFD and LQEGRVFLAGD.

This sequence belongs to the PheA/TfdB FAD monooxygenase family. It depends on FAD as a cofactor.

Its subcellular location is the cytoplasm. The catalysed reaction is phenol + NADPH + O2 + H(+) = catechol + NADP(+) + H2O. The protein operates within aromatic compound metabolism; phenol degradation. In terms of biological role, hydroxylates phenol to catechol. Also acts on cresols. The chain is Phenol 2-monooxygenase (tbuD) from Ralstonia pickettii (Burkholderia pickettii).